The primary structure comprises 245 residues: MLIIPAIDLKDGACVRLRQGRMEDSTVFSDDPVSMAAKWVEGGCRRLHLVDLNGAFEGQPVNGEVVTAIAKRYPNLPIQIGGGIRSLETIEHYVKAGVSHVIIGTKAVKQPEFVAEACKAFPGRVIVGLDAKDGFVATDGWAEVSAVQVIDLAKRFEADGVSAIVYTDIAKDGMMQGCNVPFTKALAEATSIPVIASGGIHNLGDIKALLDAKAPGIIGAITGRAIYEGTLDVAEAQAFCDNYQG.

The active-site Proton acceptor is the Asp-8. The active-site Proton donor is the Asp-130.

The protein belongs to the HisA/HisF family.

The protein localises to the cytoplasm. The enzyme catalyses 1-(5-phospho-beta-D-ribosyl)-5-[(5-phospho-beta-D-ribosylamino)methylideneamino]imidazole-4-carboxamide = 5-[(5-phospho-1-deoxy-D-ribulos-1-ylimino)methylamino]-1-(5-phospho-beta-D-ribosyl)imidazole-4-carboxamide. Its pathway is amino-acid biosynthesis; L-histidine biosynthesis; L-histidine from 5-phospho-alpha-D-ribose 1-diphosphate: step 4/9. This is 1-(5-phosphoribosyl)-5-[(5-phosphoribosylamino)methylideneamino] imidazole-4-carboxamide isomerase from Pseudomonas entomophila (strain L48).